The sequence spans 549 residues: Zinc finger protein 382 (549 aa).

Residues 1–105 (MNCHSVPLQG…DKPPTSIVII (105 aa)) are mediates interaction with TRIM28. Represses transcription stretches follow at residues 10-51 (GPVS…FISV) and 75-210 (MFPS…PEQR). The region spanning 12 to 83 (VSFKDVTVDF…RMFPSQSYLE (72 aa)) is the KRAB domain. 10 consecutive C2H2-type zinc fingers follow at residues 211–233 (FECD…DRAH), 295–317 (FQCP…QRIH), 323–345 (YICS…EKTH), 351–373 (YLCV…HKTH), 379–401 (YECT…QRTH), 407–429 (YQCA…QRTH), 435–457 (YMCS…QRIH), 463–485 (YVCS…YRIH), 491–513 (NGCP…QKTH), and 519–541 (YECH…QKTH). Residues 295 to 549 (FQCPYCGNSF…THKAETVRFQ (255 aa)) are required for transcriptional repression activity; probably mediates sequence-specific DNA-binding.

This sequence belongs to the krueppel C2H2-type zinc-finger protein family. As to quaternary structure, interacts with TRIM28; enhances the transcriptional repressor activity. As to expression, ubiquitously expressed with higher expression in lung, kidney and testis.

The protein resides in the nucleus. Functionally, functions as a sequence-specific transcriptional repressor. The protein is Zinc finger protein 382 (Znf382) of Rattus norvegicus (Rat).